The sequence spans 1047 residues: Jouberin (1047 aa).

3 stretches are compositionally biased toward basic and acidic residues: residues 1-17 (MEPE…EKVR), 29-40 (SREKTGIEEKGE), and 77-86 (LLHDDKLASE). Disordered stretches follow at residues 1–40 (MEPE…EKGE) and 67–181 (EQLT…SRDS). Residues 1 to 284 (MEPETPEKVD…IFNENFPYLL (284 aa)) form an interaction with HAP1 region. Residues 96-106 (PVPTKPESSPS) are compositionally biased toward low complexity. Residues 115–138 (GEQKKEGTPEDSQHMEGICSREQD) are compositionally biased toward basic and acidic residues. A compositionally biased stretch (basic residues) spans 149–159 (PKPKKTKKKTK). Residues 172–181 (GVHEITSRDS) are compositionally biased toward basic and acidic residues. WD repeat units follow at residues 457 to 499 (AGER…FMRE), 502 to 541 (GHLN…TSTF), 545 to 585 (PHPS…DAAI), 592 to 631 (VHKS…NDVQ), 648 to 687 (FRGV…ARKF), 691 to 730 (ANYR…QVAM), and 735 to 776 (PFKS…AQQE). Serine 853 carries the post-translational modification Phosphoserine. In terms of domain architecture, SH3 spans 902–962 (DPPPMVVALY…PANHVASETL (61 aa)). Basic and acidic residues-rich tracts occupy residues 963–987 (YRDS…KPEK) and 1013–1040 (HSEK…EPVV). The disordered stretch occupies residues 963–1047 (YRDSPPKVKE…PVVRKVTLIE (85 aa)). Serine 974 carries the phosphoserine modification.

As to quaternary structure, self-associates. Part of the tectonic-like complex (also named B9 complex). Interacts with MKS1. Interacts with NPHP1; probably as heterodimers and/or AHI1(2):NPHP1(2) heterotetramers. Interacts (via SH3 domain) with the dynamin GTPase DNM2. Interacts with HAP1; probably as AHI1(2):HAP1(2) heterotetramers. Interacts with RAB8A. Interacts with CEND1. Interacts with SPATA7. Expressed in the retina (at protein level). Highly expressed in the brain. Highly expressed in the testis. Expressed in the kidney, thymus, heart, lung, spleen. Weakly expressed in the liver, stomach, pancreas, and embryo. Strongly expressed during periods of both cortical and cerebellar development.

Its subcellular location is the cytoplasm. It is found in the cytoskeleton. It localises to the cilium basal body. The protein localises to the microtubule organizing center. The protein resides in the centrosome. Its subcellular location is the centriole. It is found in the cell junction. It localises to the adherens junction. Involved in vesicle trafficking and required for ciliogenesis, formation of primary non-motile cilium, and recruitment of RAB8A to the basal body of primary cilium. Component of the tectonic-like complex, a complex localized at the transition zone of primary cilia and acting as a barrier that prevents diffusion of transmembrane proteins between the cilia and plasma membranes. Involved in neuronal differentiation. As a positive modulator of classical Wnt signaling, may play a crucial role in ciliary signaling during cerebellum embryonic development. The sequence is that of Jouberin (Ahi1) from Mus musculus (Mouse).